Consider the following 130-residue polypeptide: Large ribosomal subunit protein bL20 (130 aa).

The protein belongs to the bacterial ribosomal protein bL20 family.

Functionally, binds directly to 23S ribosomal RNA and is necessary for the in vitro assembly process of the 50S ribosomal subunit. It is not involved in the protein synthesizing functions of that subunit. The polypeptide is Large ribosomal subunit protein bL20 (Salinispora arenicola (strain CNS-205)).